Reading from the N-terminus, the 142-residue chain is MAKKVQAYVKLQVAAGMANPSPPVGPALGQQGVNIMEFCKAFNAKTDSIEKGLPIPVVITVYSDRSFTFVTKTPPAAVLLKKAAGIKSGSGKPNKDKVGKVTRAQVREIAETKAADMTGSDVEAMTRSIEGTARSMGLVVED.

This sequence belongs to the universal ribosomal protein uL11 family. As to quaternary structure, part of the ribosomal stalk of the 50S ribosomal subunit. Interacts with L10 and the large rRNA to form the base of the stalk. L10 forms an elongated spine to which L12 dimers bind in a sequential fashion forming a multimeric L10(L12)X complex. Post-translationally, one or more lysine residues are methylated.

Forms part of the ribosomal stalk which helps the ribosome interact with GTP-bound translation factors. This chain is Large ribosomal subunit protein uL11, found in Serratia marcescens.